A 208-amino-acid polypeptide reads, in one-letter code: Large ribosomal subunit protein uL3 (208 aa).

The tract at residues 116–148 (GFQGVIKRHGQSRGPMAHGSRYHRRPGSMGPVA) is disordered.

The protein belongs to the universal ribosomal protein uL3 family. In terms of assembly, part of the 50S ribosomal subunit. Forms a cluster with proteins L14 and L19.

In terms of biological role, one of the primary rRNA binding proteins, it binds directly near the 3'-end of the 23S rRNA, where it nucleates assembly of the 50S subunit. The polypeptide is Large ribosomal subunit protein uL3 (Streptococcus pyogenes serotype M12 (strain MGAS2096)).